The primary structure comprises 90 residues: Mitochondrial import inner membrane translocase subunit Tim9 (90 aa).

A Twin CX3C motif motif is present at residues 24 to 48; sequence CFNSCVNEFGSRTVSGKEESCANNC. 2 disulfide bridges follow: cysteine 24/cysteine 48 and cysteine 28/cysteine 44.

Belongs to the small Tim family. As to quaternary structure, heterohexamer; composed of 3 copies of tim-9/tin-9.1 and 3 copies of tim-10/tin-10, named soluble 70 kDa complex. The complex associates with the tim-22 component of the TIM22 complex. Interacts with multi-pass transmembrane proteins in transit.

The protein localises to the mitochondrion inner membrane. Its function is as follows. Mitochondrial intermembrane chaperone that participates in the import and insertion of multi-pass transmembrane proteins into the mitochondrial inner membrane. May also be required for the transfer of beta-barrel precursors from the TOM complex to the sorting and assembly machinery (SAM complex) of the outer membrane. Acts as a chaperone-like protein that protects the hydrophobic precursors from aggregation and guide them through the mitochondrial intermembrane space. The chain is Mitochondrial import inner membrane translocase subunit Tim9 (tin-9.1) from Caenorhabditis elegans.